The chain runs to 520 residues: Type I restriction enzyme EcoR124I/EcoR124II methylase subunit (520 aa).

The interval 10–190 (AELHRQIWQI…YEFLISNYAA (181 aa)) is N-terminal domain. S-adenosyl-L-methionine contacts are provided by residues 198 to 203 (EFFTPQ), 230 to 232 (SGS), and Glu254. Residues 198 to 473 (EFFTPQHVSK…NDYNLSVSSY (276 aa)) form a catalytic domain region. The C-terminal tail stretch occupies residues 481 to 510 (EIIDIAELNAELKTTVSKIDQLRKDIDAIV).

Belongs to the N(4)/N(6)-methyltransferase family. As to quaternary structure, the type I restriction/modification system is composed of three polypeptides R, M and S; the restriction enzyme has stoichiometry R(2)M(2)S(1) while the methyltransferase is M(2)S(1). There is an equilibrium between R(2)M(2)S(1) and R(1)M(2)S(1); the latter is methylation and translocation proficient but restriction deficient. In terms of assembly, (Microbial infection) Holoenenzyme interacts with Escherichia phage T7 protein Ocr; this interaction leads to the inhibition of the restriction activity, but may still allow methylation and translocation.

The enzyme catalyses a 2'-deoxyadenosine in DNA + S-adenosyl-L-methionine = an N(6)-methyl-2'-deoxyadenosine in DNA + S-adenosyl-L-homocysteine + H(+). Its function is as follows. The subtype gamma methyltransferase (M) subunit of a type I restriction enzyme. The M and S subunits together form a methyltransferase (MTase) that methylates A-3 on the top and bottom strand of the sequence 5'-GAAN(6)RTCG-3' (for EcoR124I) and 5'-GAAN(7)RTCG-3' (for EcoR124II). In the presence of the R subunit the complex can also act as an endonuclease, binding to the same target sequence but cutting the DNA some distance from this site. Whether the DNA is cut or modified depends on the methylation state of the target sequence. When the target site is unmodified, the DNA is cut. When the target site is hemimethylated, the complex acts as a maintenance MTase modifying the DNA so that both strands become methylated. After locating a non-methylated recognition site, the enzyme complex serves as a molecular motor that translocates DNA in an ATP-dependent manner until a collision occurs that triggers cleavage. The R(1)M(2)S(1) complex translocates an average of 555 bp/second on nicked DNA; the R(2)M(2)S(1) complex translocates at double that speed. The 2 R subunit motors are independent and track along the helical pitch of the DNA, inducing positive supercoiling ahead of themselves. The polypeptide is Type I restriction enzyme EcoR124I/EcoR124II methylase subunit (hsdM) (Escherichia coli).